The sequence spans 113 residues: Dynein light chain Tctex-type 1 (113 aa).

At methionine 1 the chain carries N-acetylmethionine. Positions 41–113 are interaction with GNB1; it reads QWTTNVVEQT…CIVSAFGLSI (73 aa).

The protein belongs to the dynein light chain Tctex-type family. As to quaternary structure, homodimer. The cytoplasmic dynein 1 complex consists of two catalytic heavy chains (HCs) and a number of non-catalytic subunits presented by intermediate chains (ICs), light intermediate chains (LICs) and light chains (LCs); the composition seems to vary in respect to the IC, LIC and LC composition. The heavy chain homodimer serves as a scaffold for the probable homodimeric assembly of the respective non-catalytic subunits. The ICs and LICs bind directly to the HC dimer and dynein LCs assemble on the IC dimer. DYNLT1 and DYNLT3 compete for association with dynein IC (DYNC1I1 or DYNC1I2). Self-associates. Interacts with RHO. Interacts with DYNC1I1 and DYNC1I2. Interacts with DOC2A, DOC2B and SCN10A. Interacts with PVR. Interacts with SVIL isoform 2. Interacts with GNB1; the interaction occurs in presence of guanine nucleotide-binding protein G(T) subunit gamma; the interaction diminishes the association of DYNLT1 with dynein IC (DYNC1I1 or DYNC1I2). Interacts with GNB2, GNB3 and GNB5; the interactions occur in presence of guanine nucleotide-binding protein G(T) subunit gamma. Interacts with ACVR2B and ARHGEF2. Interacts with DNAI4. Interacts with CFAP61. In terms of processing, phosphorylated by BMPR2. The phosphorylation status is proposed to regulate the association with the cytoplasmic dynein complex and may have role in cytoplasmic dynein cargo release.

It localises to the golgi apparatus. Its subcellular location is the cytoplasm. It is found in the cytoskeleton. The protein resides in the spindle. Acts as one of several non-catalytic accessory components of the cytoplasmic dynein 1 complex that are thought to be involved in linking dynein to cargos and to adapter proteins that regulate dynein function. Cytoplasmic dynein 1 acts as a motor for the intracellular retrograde motility of vesicles and organelles along microtubules. Binds to transport cargos and is involved in apical cargo transport such as rhodopsin-bearing vesicles in polarized epithelia. Is involved in intracellular targeting of D-type retrovirus gag polyproteins to the cytoplasmic assembly site. May also be a accessory component of axonemal dynein. Its function is as follows. Plays a role in neuronal morphogenesis; the function is independent of cytoplasmic dynein and seems to be coupled to regulation of the actin cytoskeleton by enhancing Rac1 activity. Required for neurite outgrowth. The function in neurogenesis may be regulated by association with a G-protein beta-gamma dimer. May function as a receptor-independent activator of heterotrimeric G-protein signaling; the activation appears to be independent of a nucleotide exchange. Plays a role in regulating neurogenesis; inhibits the genesis of neurons from precursor cells during cortical development presumably by antagonizing ARHGEF2. Unrelated to the role in retrograde microtubule-associated movement may play a role in the dimerization of cytoplasmic proteins/domains such as for ACVR2B. Binds to the cytoplasmic domain of ACVR2B and, in vitro, inhibits ACVR2B signaling. Involved in the regulation of mitotic spindle orientation. The sequence is that of Dynein light chain Tctex-type 1 (Dynlt1) from Rattus norvegicus (Rat).